Consider the following 207-residue polypeptide: Abscisic acid receptor PYL4 (207 aa).

Residues 45 to 195 (HEVGPNQCCS…NLQSLAKIAE (151 aa)) are START-like. C52 and C176 are joined by a disulfide. Residues K81, 111–116 (AASSTE), 138–144 (RLSNYRS), and E160 contribute to the abscisate site. The short motif at 107–111 (SGLPA) is the Gate loop element. The short motif at 137–139 (HRL) is the Latch loop element.

This sequence belongs to the PYR/PYL/RCAR abscisic acid intracellular receptor family. In terms of assembly, monomer. Homodimer. Binds ABA on one subunit only. Interacts with HAB1, ABI1 and ABI2, and possibly with other PP2Cs. Binds to CARs protein in an ABA-independent manner, both at the plasma membrane and in the nucleus. Interacts directly with CAR1 and CAR4. Interacts with TOPP1. Interacts with DDA1. Interacts with FREE1 (via N-terminus). Interacts with the E3 ubiquitin-protein ligase RSL1 at the plasma membrane. Post-translationally, ubiquitynated and degraded by the proteasome upon binding to the E3 ubiquitin-protein ligase RSL1 at the plasma membrane.

The protein resides in the cytoplasm. Its subcellular location is the nucleus. It is found in the cell membrane. The protein localises to the vacuole. Its function is as follows. Receptor for abscisic acid (ABA) required for ABA-mediated responses such as stomatal closure and germination inhibition. Inhibits the activity of group-A protein phosphatases type 2C (PP2Cs) when activated by ABA. Can be activated by both (-)-ABA and (+)-ABA. This Arabidopsis thaliana (Mouse-ear cress) protein is Abscisic acid receptor PYL4.